Reading from the N-terminus, the 525-residue chain is Exoglucanase 1 (525 aa).

An N-terminal signal peptide occupies residues 1–18 (MRTAKFATLAALVASAAA). Residues 19 to 467 (QQACSLTTER…AGNGGNNGGN (449 aa)) form a catalytic region. Glu231 serves as the catalytic Nucleophile. Glu236 acts as the Proton donor in catalysis. Asn289 carries N-linked (GlcNAc...) asparagine glycosylation. Residues 454 to 492 (GLPGAGNGGNNGGNPPPPTTTTSSAPATTTTASAGPKAG) are disordered. The span at 456–465 (PGAGNGGNNG) shows a compositional bias: gly residues. Positions 468–489 (PPPPTTTTSSAPATTTTASAGP) are linker. Residues 473 to 489 (TTTSSAPATTTTASAGP) are compositionally biased toward low complexity. Residues 489–525 (PKAGRWQQCGGIGFTGPTQCEEPYICTKLNDWYSQCL) enclose the CBM1 domain. Intrachain disulfides connect Cys497–Cys514 and Cys508–Cys524.

The protein belongs to the glycosyl hydrolase 7 (cellulase C) family.

The enzyme catalyses Hydrolysis of (1-&gt;4)-beta-D-glucosidic linkages in cellulose and cellotetraose, releasing cellobiose from the non-reducing ends of the chains.. The biological conversion of cellulose to glucose generally requires three types of hydrolytic enzymes: (1) Endoglucanases which cut internal beta-1,4-glucosidic bonds; (2) Exocellobiohydrolases that cut the disaccharide cellobiose from the non-reducing end of the cellulose polymer chain; (3) Beta-1,4-glucosidases which hydrolyze the cellobiose and other short cello-oligosaccharides to glucose. This is Exoglucanase 1 (CBH-1) from Humicola insolens (Soft-rot fungus).